The chain runs to 1248 residues: Period circadian protein homolog 2 (1248 aa).

The segment at 1 to 57 is disordered; it reads MNGYVEFSPSPTKESVEPQPSQAVLQEDVDMSSGSSGHENCSMGRDSQGSDCDDNGK. Composition is skewed to polar residues over residues 9 to 24 and 32 to 50; these read PSPT…SQAV and SSGS…SQGS. The short motif at 105–114 is the Nuclear export signal 1 element; sequence LIRTLRELKV. The PAS 1 domain maps to 175-242; the sequence is ITSEYIVKNA…FHSYTTPYKL (68 aa). Residues 302–306 carry the LXXLL motif; that stretch reads LCCLL. Residues 315–381 enclose the PAS 2 domain; the sequence is YEAPRIPPEK…MLAIHKKILQ (67 aa). Positions 389 to 432 constitute a PAC domain; sequence YSPIRFRARNGEYITLDTSWSSFINPWSRKISFIIGRHKVRVGP. The short motif at 456–465 is the Nuclear export signal 2 element; the sequence is LTEQIHRLLM. Disordered regions lie at residues 467-563 and 619-638; these read PVPH…SLPK and VSPG…VSSH. The important for protein stability stretch occupies residues 474-478; the sequence is SGYGS. Positions 506 to 706 are CSNK1E binding domain; that stretch reads RKSGISKNGS…GAPGGLSQEK (201 aa). Residues 510-521 show a composition bias toward polar residues; that stretch reads ISKNGSKTQTRS. Ser521, Ser524, Ser527, and Ser540 each carry phosphoserine. Basic and acidic residues predominate over residues 523-534; the sequence is FSHESGEQKEIA. Residues Ser656, Ser690, Ser694, Ser703, and Ser755 each carry the phosphoserine modification. Disordered stretches follow at residues 675–708 and 751–829; these read DKKP…EKGP and RAQA…PSAP. Positions 773 to 789 match the Nuclear localization signal motif; it reads KKTGKNRKLKSKRVKTR. The span at 774–787 shows a compositional bias: basic residues; sequence KTGKNRKLKSKRVK. Over residues 816–827 the composition is skewed to low complexity; that stretch reads SPSDTSQSSCPS. The interval 873–1058 is interaction with PPARG; that stretch reads DFAVQPLPLA…DLCSATGSAL (186 aa). The residue at position 930 (Ser930) is a Phosphoserine. The tract at residues 950–971 is disordered; the sequence is TPPAATVTSGRASPPLFQSRGS. Thr955 bears the Phosphothreonine mark. Position 962 is a phosphoserine (Ser962). The Nuclear export signal 3 motif lies at 974–981; that stretch reads LQLNLLQL. A disordered region spans residues 984–1035; it reads APEGSTGAAGTSGTTGTAAAGLDCTPGTSRDRQPKAPSTCKEPSDTQNSDAL. Residues 987 to 1004 are compositionally biased toward low complexity; sequence GSTGAAGTSGTTGTAAAG. The LXXLL signature appears at 1042–1046; that stretch reads LNLLL. Positions 1057–1080 are enriched in low complexity; sequence ALSGSGASATSDSLGSGSLGCDAS. Positions 1057 to 1113 are disordered; it reads ALSGSGASATSDSLGSGSLGCDASRSGAGSSDTSHTSKYFGSIDSSENNHKAKVSTD. The segment covering 1083–1102 has biased composition (polar residues); sequence GAGSSDTSHTSKYFGSIDSS. Positions 1103-1112 are enriched in basic and acidic residues; sequence ENNHKAKVST. Residue Ser1117 is modified to Phosphoserine. The tract at residues 1148-1248 is CRY binding domain; that stretch reads SRDLESVLRE…LTGPRIEAQT (101 aa). Residues 1215–1248 are disordered; the sequence is PYEEDSPSPGLCDTSEAKEEEGEQLTGPRIEAQT.

As to quaternary structure, homodimer. Component of the circadian core oscillator, which includes the CRY proteins, CLOCK or NPAS2, BMAL1 or BMAL2, CSNK1D and/or CSNK1E, TIMELESS, and the PER proteins. Interacts with CLOCK-BMAL1 (off DNA). Interacts with BMAL2. Interacts directly with PER1 and PER3, and through a C-terminal domain, with CRY1 and CRY2. Interacts (via PAS 2 domain) with TIMELESS. Interacts with NFIL3. Different large complexes have been identified with different repressive functions. The core of PER complexes is composed of at least PER1, PER2, PER3, CRY1, CRY2, CSNK1D and/or CSNK1E. The large PER complex involved in the repression of transcriptional termination is composed of at least PER2, CDK9, DDX5, DHX9, NCBP1 and POLR2A (active). The large PER complex involved in the histone deacetylation is composed of at least HDAC1, PER2, SFPQ and SIN3A. The large PER complex involved in the histone methylation is composed of at least PER2, CBX3, TRIM28, SUV39H1 and/or SUV39H2; CBX3 mediates the formation of the complex. Interacts with SETX; the interaction inhibits termination of circadian target genes. Interacts with the nuclear receptors HNF4A, NR1D1, NR4A2, RORA, PPARA, PPARG and THRA; the interaction with at least PPARG is ligand dependent. Interacts with PML. Interacts (phosphorylated) with BTRC and FBXW11; the interactions trigger proteasomal degradation. Interacts with NONO and SFPQ. Interacts with PRKCDBP. Interacts with MAGEL2. Interacts with MAP1LC3B. Interacts with HNF4A. In terms of processing, acetylated. Deacetylated by SIRT1, resulting in decreased protein stability. Deacetylated by SIRT6, preventing its degradation by the proteasome, resulting in increased protein stability. Post-translationally, phosphorylated by CSNK1E and CSNK1D. Phosphorylation results in PER2 protein degradation. May be dephosphorylated by PP1. Ubiquitinated, leading to its proteasomal degradation. Ubiquitination may be inhibited by CRY1. Expressed in the brain, mainly in the suprachiasmatic nucleus (SCN). Expression also found in the harderian gland, lung, eye, intestine, liver and skeletal muscle.

It is found in the nucleus. It localises to the cytoplasm. Its subcellular location is the perinuclear region. Functionally, transcriptional repressor which forms a core component of the circadian clock. The circadian clock, an internal time-keeping system, regulates various physiological processes through the generation of approximately 24 hour circadian rhythms in gene expression, which are translated into rhythms in metabolism and behavior. It is derived from the Latin roots 'circa' (about) and 'diem' (day) and acts as an important regulator of a wide array of physiological functions including metabolism, sleep, body temperature, blood pressure, endocrine, immune, cardiovascular, and renal function. Consists of two major components: the central clock, residing in the suprachiasmatic nucleus (SCN) of the brain, and the peripheral clocks that are present in nearly every tissue and organ system. Both the central and peripheral clocks can be reset by environmental cues, also known as Zeitgebers (German for 'timegivers'). The predominant Zeitgeber for the central clock is light, which is sensed by retina and signals directly to the SCN. The central clock entrains the peripheral clocks through neuronal and hormonal signals, body temperature and feeding-related cues, aligning all clocks with the external light/dark cycle. Circadian rhythms allow an organism to achieve temporal homeostasis with its environment at the molecular level by regulating gene expression to create a peak of protein expression once every 24 hours to control when a particular physiological process is most active with respect to the solar day. Transcription and translation of core clock components (CLOCK, NPAS2, BMAL1, BMAL2, PER1, PER2, PER3, CRY1 and CRY2) plays a critical role in rhythm generation, whereas delays imposed by post-translational modifications (PTMs) are important for determining the period (tau) of the rhythms (tau refers to the period of a rhythm and is the length, in time, of one complete cycle). A diurnal rhythm is synchronized with the day/night cycle, while the ultradian and infradian rhythms have a period shorter and longer than 24 hours, respectively. Disruptions in the circadian rhythms contribute to the pathology of cardiovascular diseases, cancer, metabolic syndrome and aging. A transcription/translation feedback loop (TTFL) forms the core of the molecular circadian clock mechanism. Transcription factors, CLOCK or NPAS2 and BMAL1 or BMAL2, form the positive limb of the feedback loop, act in the form of a heterodimer and activate the transcription of core clock genes and clock-controlled genes (involved in key metabolic processes), harboring E-box elements (5'-CACGTG-3') within their promoters. The core clock genes: PER1/2/3 and CRY1/2 which are transcriptional repressors form the negative limb of the feedback loop and interact with the CLOCK|NPAS2-BMAL1|BMAL2 heterodimer inhibiting its activity and thereby negatively regulating their own expression. This heterodimer also activates nuclear receptors NR1D1/2 and RORA/B/G, which form a second feedback loop and which activate and repress BMAL1 transcription, respectively. PER1 and PER2 proteins transport CRY1 and CRY2 into the nucleus with appropriate circadian timing, but also contribute directly to repression of clock-controlled target genes through interaction with several classes of RNA-binding proteins, helicases and others transcriptional repressors. PER appears to regulate circadian control of transcription by at least three different modes. First, interacts directly with the CLOCK-BMAL1 at the tail end of the nascent transcript peak to recruit complexes containing the SIN3-HDAC that remodel chromatin to repress transcription. Second, brings H3K9 methyltransferases such as SUV39H1 and SUV39H2 to the E-box elements of the circadian target genes, like PER2 itself or PER1. The recruitment of each repressive modifier to the DNA seems to be very precisely temporally orchestrated by the large PER complex, the deacetylases acting before than the methyltransferases. Additionally, large PER complexes are also recruited to the target genes 3' termination site through interactions with RNA-binding proteins and helicases that may play a role in transcription termination to regulate transcription independently of CLOCK-BMAL1 interactions. Recruitment of large PER complexes to the elongating polymerase at PER and CRY termination sites inhibited SETX action, impeding RNA polymerase II release and thereby repressing transcriptional reinitiation. May propagate clock information to metabolic pathways via the interaction with nuclear receptors. Coactivator of PPARA and corepressor of NR1D1, binds rhythmically at the promoter of nuclear receptors target genes like BMAL1 or G6PC1. Directly and specifically represses PPARG proadipogenic activity by blocking PPARG recruitment to target promoters and thereby transcriptional activation. Required for fatty acid and lipid metabolism, is involved as well in the regulation of circulating insulin levels. Plays an important role in the maintenance of cardiovascular functions through the regulation of NO and vasodilatatory prostaglandins production in aortas. Controls circadian glutamate uptake in synaptic vesicles through the regulation of VGLUT1 expression. May also be involved in the regulation of inflammatory processes. Represses the CLOCK-BMAL1 induced transcription of BHLHE40/DEC1 and ATF4. Negatively regulates the formation of the TIMELESS-CRY1 complex by competing with TIMELESS for binding to CRY1. The protein is Period circadian protein homolog 2 (PER2) of Spalax judaei (Judean Mountains blind mole rat).